We begin with the raw amino-acid sequence, 335 residues long: Vitamin B12 import system permease protein BtuC (335 aa).

The next 9 helical transmembrane spans lie at 21–43 (FLAI…GENW), 63–82 (FPRV…AGAV), 95–114 (GLLG…VLMF), 119–141 (PFWL…LLTF), 153–175 (LLVG…YFST), 195–212 (WRHQ…IWLS), 244–266 (FAVG…IGLV), 281–303 (TLLP…LSRL), and 310–329 (VPIG…WLLL).

Belongs to the binding-protein-dependent transport system permease family. FecCD subfamily. In terms of assembly, the complex is composed of two ATP-binding proteins (BtuD), two transmembrane proteins (BtuC) and a solute-binding protein (BtuF).

Its subcellular location is the cell inner membrane. Its function is as follows. Part of the ABC transporter complex BtuCDF involved in vitamin B12 import. Involved in the translocation of the substrate across the membrane. This chain is Vitamin B12 import system permease protein BtuC, found in Photorhabdus laumondii subsp. laumondii (strain DSM 15139 / CIP 105565 / TT01) (Photorhabdus luminescens subsp. laumondii).